The following is a 293-amino-acid chain: ATP synthase gamma chain (293 aa).

This sequence belongs to the ATPase gamma chain family. In terms of assembly, F-type ATPases have 2 components, CF(1) - the catalytic core - and CF(0) - the membrane proton channel. CF(1) has five subunits: alpha(3), beta(3), gamma(1), delta(1), epsilon(1). CF(0) has three main subunits: a, b and c.

It localises to the cell membrane. Produces ATP from ADP in the presence of a proton gradient across the membrane. The gamma chain is believed to be important in regulating ATPase activity and the flow of protons through the CF(0) complex. The sequence is that of ATP synthase gamma chain from Streptococcus sanguinis.